The chain runs to 130 residues: Holo-[acyl-carrier-protein] synthase (130 aa).

Residues Asp9 and Glu58 each contribute to the Mg(2+) site.

This sequence belongs to the P-Pant transferase superfamily. AcpS family. Mg(2+) is required as a cofactor.

The protein localises to the cytoplasm. It carries out the reaction apo-[ACP] + CoA = holo-[ACP] + adenosine 3',5'-bisphosphate + H(+). In terms of biological role, transfers the 4'-phosphopantetheine moiety from coenzyme A to a Ser of acyl-carrier-protein. The chain is Holo-[acyl-carrier-protein] synthase from Mycobacterium tuberculosis (strain CDC 1551 / Oshkosh).